Reading from the N-terminus, the 943-residue chain is Protein translocase subunit SecA (943 aa).

Residues Gln-90, Gly-108 to Thr-112, and Asp-509 each bind ATP. The tract at residues Pro-535–Lys-564 is disordered.

It belongs to the SecA family. Monomer and homodimer. Part of the essential Sec protein translocation apparatus which comprises SecA, SecYEG and auxiliary proteins SecDF. Other proteins may also be involved.

It localises to the cell inner membrane. The protein localises to the cellular thylakoid membrane. Its subcellular location is the cytoplasm. It carries out the reaction ATP + H2O + cellular proteinSide 1 = ADP + phosphate + cellular proteinSide 2.. Functionally, part of the Sec protein translocase complex. Interacts with the SecYEG preprotein conducting channel. Has a central role in coupling the hydrolysis of ATP to the transfer of proteins into and across the cell membrane, serving as an ATP-driven molecular motor driving the stepwise translocation of polypeptide chains across the membrane. Its function is as follows. Probably participates in protein translocation into and across both the cytoplasmic and thylakoid membranes in cyanobacterial cells. In Prochlorococcus marinus (strain MIT 9215), this protein is Protein translocase subunit SecA.